The primary structure comprises 301 residues: Porin (301 aa).

Homotrimer.

It is found in the cell outer membrane. In terms of biological role, forms channels that allow the passive diffusion of small hydrophilic solutes up to an exclusion limit of about 0.6 kDa. The polypeptide is Porin (Rhodobacter capsulatus (Rhodopseudomonas capsulata)).